The primary structure comprises 355 residues: Mu-like prophage FluMu protein gp47 (355 aa).

The protein belongs to the Mu gp47/PBSX XkdT family.

The chain is Mu-like prophage FluMu protein gp47 from Haemophilus influenzae (strain ATCC 51907 / DSM 11121 / KW20 / Rd).